The sequence spans 70 residues: DNA-directed RNA polymerase subunit epsilon (70 aa).

Belongs to the RNA polymerase subunit epsilon family. As to quaternary structure, RNAP is composed of a core of 2 alpha, a beta and a beta' subunit. The core is associated with a delta subunit, and at least one of epsilon or omega. When a sigma factor is associated with the core the holoenzyme is formed, which can initiate transcription.

It carries out the reaction RNA(n) + a ribonucleoside 5'-triphosphate = RNA(n+1) + diphosphate. In terms of biological role, a non-essential component of RNA polymerase (RNAP). The sequence is that of DNA-directed RNA polymerase subunit epsilon from Latilactobacillus sakei subsp. sakei (strain 23K) (Lactobacillus sakei subsp. sakei).